Here is a 163-residue protein sequence, read N- to C-terminus: Peptide deformylase 3 (163 aa).

2 residues coordinate Fe cation: Cys91 and His133. Glu134 is an active-site residue. His137 provides a ligand contact to Fe cation.

It belongs to the polypeptide deformylase family. It depends on Fe(2+) as a cofactor.

The enzyme catalyses N-terminal N-formyl-L-methionyl-[peptide] + H2O = N-terminal L-methionyl-[peptide] + formate. In terms of biological role, removes the formyl group from the N-terminal Met of newly synthesized proteins. Requires at least a dipeptide for an efficient rate of reaction. N-terminal L-methionine is a prerequisite for activity but the enzyme has broad specificity at other positions. The polypeptide is Peptide deformylase 3 (Shewanella oneidensis (strain ATCC 700550 / JCM 31522 / CIP 106686 / LMG 19005 / NCIMB 14063 / MR-1)).